The following is a 222-amino-acid chain: UPF0758 protein YicR (222 aa).

The MPN domain occupies 100-222 (PLLSPEMTRE…YVSFAERGWI (123 aa)). Residues His-171, His-173, and Asp-184 each coordinate Zn(2+). The short motif at 171–184 (HNHPSGCAEPSKAD) is the JAMM motif element.

It belongs to the UPF0758 family. YicR subfamily.

This chain is UPF0758 protein YicR, found in Escherichia coli O9:H4 (strain HS).